A 386-amino-acid polypeptide reads, in one-letter code: Prostatic acid phosphatase (386 aa).

An N-terminal signal peptide occupies residues 1-32 (MRAAPLLLARAASLSLGFLFLLFFWLDRSVLA). Residue R43 participates in substrate binding. H44 (nucleophile) is an active-site residue. R47 lines the substrate pocket. A glycan (N-linked (GlcNAc...) asparagine) is linked at N94. Residue R111 coordinates substrate. 3 disulfides stabilise this stretch: C161-C372, C215-C313, and C347-C351. N220 carries N-linked (GlcNAc...) asparagine glycosylation. A substrate-binding site is contributed by H289. Residue D290 is the Proton donor of the active site. N333 carries N-linked (GlcNAc...) asparagine glycosylation.

Belongs to the histidine acid phosphatase family. As to quaternary structure, homodimer; dimer formation is required for phosphatase activity. N-glycosylated. High mannose content, partially sialylated and fucosylated biantennary complex. Also fucosylated with partially sialylated triantennary complex oligosaccharides. Post-translationally, proteolytically cleaved in seminal fluid to produce several peptides. Peptide PAPf39, the most prominent, forms amyloid beta-sheet fibrils, SEVI (semen-derived enhancer of viral infection). In terms of tissue distribution, highly expressed in the prostate, restricted to glandular and ductal epithelial cells. Also expressed in bladder, kidney, pancreas, lung, cervix, testis and ovary. Weak expression in a subset of pancreatic islet cells, squamous epithelia, the pilosebaceous unit, colonic neuroendocrine cells and skin adnexal structures. Low expression in prostate carcinoma cells and tissues. Widely expressed. Expressed in the sarcolemma of skeletal muscle.

Its subcellular location is the secreted. It localises to the cell membrane. The protein resides in the lysosome membrane. It is found in the nucleus. The protein localises to the cytoplasm. Its subcellular location is the cytosol. It catalyses the reaction a phosphate monoester + H2O = an alcohol + phosphate. The enzyme catalyses 1-(9Z-octadecenoyl)-sn-glycero-3-phosphate + H2O = 1-(9Z-octadecenoyl)-sn-glycerol + phosphate. It carries out the reaction a ribonucleoside 5'-phosphate + H2O = a ribonucleoside + phosphate. The catalysed reaction is O-phospho-L-tyrosyl-[protein] + H2O = L-tyrosyl-[protein] + phosphate. Its activity is regulated as follows. Phosphatase activity inhibited by L(+)-tartrate, and by its derivative, alpha-benzylaminobenzylphosphonic acid. A non-specific tyrosine phosphatase that dephosphorylates a diverse number of substrates under acidic conditions (pH 4-6) including alkyl, aryl, and acyl orthophosphate monoesters and phosphorylated proteins. Has lipid phosphatase activity and inactivates lysophosphatidic acid in seminal plasma. In terms of biological role, tyrosine phosphatase that acts as a tumor suppressor of prostate cancer through dephosphorylation of ERBB2 and deactivation of MAPK-mediated signaling. In addition to its tyrosine phosphatase activity has ecto-5'-nucleotidase activity in dorsal root ganglion (DRG) neurons. Generates adenosine from AMP which acts as a pain suppressor. Its function is as follows. (Microbial infection) Forms amyloid beta-sheet fibrils in semen. These fibrils, termed SEVI (semen-derived enhancer of viral infection) capture HIV virions, attach them to target cells and enhance infection. SEVI amyloid fibrils are degraded by polyphenol epigallocatechin-3-gallate (EGCG), a constituent of green tea. Target cell attachment and enhancement of HIV infection is inhibited by surfen. Also similarly boosts XMRV (xenotropic murine leukemia virus-related virus) infection. The chain is Prostatic acid phosphatase from Homo sapiens (Human).